Here is a 586-residue protein sequence, read N- to C-terminus: Proteasome-associated ATPase (586 aa).

A coiled-coil region spans residues 11-76 (AWRELEAVRA…LREEVDRLGQ (66 aa)). 273–278 (GCGKTL) provides a ligand contact to ATP. The interval 585-586 (YL) is docks into pockets in the proteasome alpha-ring.

This sequence belongs to the AAA ATPase family. Homohexamer. Assembles into a hexameric ring structure that caps the 20S proteasome core. Strongly interacts with the prokaryotic ubiquitin-like protein Pup through a hydrophobic interface; the interacting region of ARC lies in its N-terminal coiled-coil domain. There is one Pup binding site per ARC hexamer ring. Upon ATP-binding, the C-terminus of ARC interacts with the alpha-rings of the proteasome core, possibly by binding to the intersubunit pockets.

It functions in the pathway protein degradation; proteasomal Pup-dependent pathway. ATPase which is responsible for recognizing, binding, unfolding and translocation of pupylated proteins into the bacterial 20S proteasome core particle. May be essential for opening the gate of the 20S proteasome via an interaction with its C-terminus, thereby allowing substrate entry and access to the site of proteolysis. Thus, the C-termini of the proteasomal ATPase may function like a 'key in a lock' to induce gate opening and therefore regulate proteolysis. The chain is Proteasome-associated ATPase from Nocardia farcinica (strain IFM 10152).